We begin with the raw amino-acid sequence, 131 residues long: Small ribosomal subunit protein uS8 (131 aa).

Belongs to the universal ribosomal protein uS8 family. As to quaternary structure, part of the 30S ribosomal subunit. Contacts proteins S5 and S12.

In terms of biological role, one of the primary rRNA binding proteins, it binds directly to 16S rRNA central domain where it helps coordinate assembly of the platform of the 30S subunit. In Chlorobaculum tepidum (strain ATCC 49652 / DSM 12025 / NBRC 103806 / TLS) (Chlorobium tepidum), this protein is Small ribosomal subunit protein uS8.